Consider the following 320-residue polypeptide: ATP-dependent 6-phosphofructokinase (320 aa).

Glycine 12 lines the ATP pocket. ADP-binding positions include 22 to 26 (RGVVR) and 55 to 60 (RYSVSD). ATP-binding positions include 73–74 (RF) and 103–106 (GDGS). Aspartate 104 contributes to the Mg(2+) binding site. 126–128 (TID) serves as a coordination point for substrate. The active-site Proton acceptor is the aspartate 128. Arginine 155 serves as a coordination point for ADP. Residues arginine 163 and 170–172 (MGR) contribute to the substrate site. Residues 186-188 (GCE), lysine 212, and 214-216 (KKH) contribute to the ADP site. Substrate-binding positions include glutamate 223, arginine 244, and 250 to 253 (HIQR).

Belongs to the phosphofructokinase type A (PFKA) family. ATP-dependent PFK group I subfamily. Prokaryotic clade 'B1' sub-subfamily. Homotetramer. Mg(2+) is required as a cofactor.

It is found in the cytoplasm. It catalyses the reaction beta-D-fructose 6-phosphate + ATP = beta-D-fructose 1,6-bisphosphate + ADP + H(+). It participates in carbohydrate degradation; glycolysis; D-glyceraldehyde 3-phosphate and glycerone phosphate from D-glucose: step 3/4. With respect to regulation, allosterically activated by ADP and other diphosphonucleosides, and allosterically inhibited by phosphoenolpyruvate. Catalyzes the phosphorylation of D-fructose 6-phosphate to fructose 1,6-bisphosphate by ATP, the first committing step of glycolysis. This Salmonella gallinarum (strain 287/91 / NCTC 13346) protein is ATP-dependent 6-phosphofructokinase.